Consider the following 152-residue polypeptide: Superoxide dismutase [Cu-Zn] 4A (152 aa).

Residues histidine 45, histidine 47, and histidine 62 each coordinate Cu cation. An intrachain disulfide couples cysteine 56 to cysteine 145. Zn(2+) contacts are provided by histidine 62, histidine 70, histidine 79, and aspartate 82. Histidine 119 is a Cu cation binding site.

It belongs to the Cu-Zn superoxide dismutase family. In terms of assembly, homodimer. Requires Cu cation as cofactor. Zn(2+) is required as a cofactor.

The protein resides in the cytoplasm. The enzyme catalyses 2 superoxide + 2 H(+) = H2O2 + O2. Its function is as follows. Destroys radicals which are normally produced within the cells and which are toxic to biological systems. This chain is Superoxide dismutase [Cu-Zn] 4A (SODCC.3), found in Zea mays (Maize).